The sequence spans 128 residues: Global transcriptional regulator Spx 1 (128 aa).

Residues Cys10 and Cys13 are joined by a disulfide bond.

The protein belongs to the ArsC family. Spx subfamily. In terms of assembly, interacts with the C-terminal domain of the alpha subunit of the RNAP.

It is found in the cytoplasm. Functionally, global transcriptional regulator that plays a key role in stress response and exerts either positive or negative regulation of genes. Acts by interacting with the C-terminal domain of the alpha subunit of the RNA polymerase (RNAP). This interaction can enhance binding of RNAP to the promoter region of target genes and stimulate their transcription, or block interaction of RNAP with activator. The chain is Global transcriptional regulator Spx 1 from Lactococcus lactis subsp. lactis (strain IL1403) (Streptococcus lactis).